Consider the following 156-residue polypeptide: Small ribosomal subunit protein uS7 (156 aa).

This sequence belongs to the universal ribosomal protein uS7 family. Part of the 30S ribosomal subunit. Contacts proteins S9 and S11.

Its function is as follows. One of the primary rRNA binding proteins, it binds directly to 16S rRNA where it nucleates assembly of the head domain of the 30S subunit. Is located at the subunit interface close to the decoding center, probably blocks exit of the E-site tRNA. In Trichlorobacter lovleyi (strain ATCC BAA-1151 / DSM 17278 / SZ) (Geobacter lovleyi), this protein is Small ribosomal subunit protein uS7.